Consider the following 319-residue polypeptide: MKKSITTLDLNLLLCLQLLMQERSVTKAAKRMNVTPSAVSKSLAKLRAWFDDPLFVNSPLGLSPTPLMVSMEQNLAEWMQMSNLLLDKPHHQTPRGLKFELAAESPLMMIMLNALSKRIYQRYPQATIKLRNWDYDSLDAITRGEVDIGFSGRESHPRSRELLSSLPLAIDYEVLFSDVPCVWLRKDHPALHEAWNLDTFLRYPHISICWEQSDTWALDNVLQELGRERTIAMSLPEFEQSLFMAAQPDNLLLATAPRYCQYYNQLHQLPLVALPLPFDESQQKKLEVPFTLLWHKRNSRNPKIVWLRETIKNLYASMA.

The HTH lysR-type domain occupies 8 to 65; it reads LDLNLLLCLQLLMQERSVTKAAKRMNVTPSAVSKSLAKLRAWFDDPLFVNSPLGLSPT. Residues 25-44 constitute a DNA-binding region (H-T-H motif); that stretch reads VTKAAKRMNVTPSAVSKSLA.

It belongs to the LysR transcriptional regulatory family.

In terms of biological role, involved in anaerobic NO protection. In Escherichia coli O6:H1 (strain CFT073 / ATCC 700928 / UPEC), this protein is HTH-type transcriptional regulator YidZ.